Reading from the N-terminus, the 418-residue chain is Ankyrin repeat domain-containing protein 61 (418 aa).

ANK repeat units follow at residues 27 to 57, 75 to 104, 132 to 161, 167 to 196, 200 to 229, 234 to 273, 277 to 306, and 310 to 343; these read ALHS…NQPI, ESII…DPEV, NRTH…QVNT, NKRS…DVNA, ASMT…NVNC, TGNT…KVNA, KGQT…NVNI, and NGES…PLRM.

This is Ankyrin repeat domain-containing protein 61 (ANKRD61) from Homo sapiens (Human).